A 344-amino-acid polypeptide reads, in one-letter code: Isopentenyl-diphosphate delta-isomerase (344 aa).

9 to 10 (RK) is a substrate binding site. Residues 65-67 (AMT), serine 95, and asparagine 124 contribute to the FMN site. Glutamine 154 is a substrate binding site. Position 155 (glutamate 155) interacts with Mg(2+). FMN-binding positions include lysine 185, threonine 215, 259–261 (GVR), and 280–281 (SG).

Belongs to the IPP isomerase type 2 family. Homooctamer. Dimer of tetramers. It depends on FMN as a cofactor. NADPH serves as cofactor. Requires Mg(2+) as cofactor.

Its subcellular location is the cytoplasm. It catalyses the reaction isopentenyl diphosphate = dimethylallyl diphosphate. Its function is as follows. Involved in the biosynthesis of isoprenoids. Catalyzes the 1,3-allylic rearrangement of the homoallylic substrate isopentenyl (IPP) to its allylic isomer, dimethylallyl diphosphate (DMAPP). The chain is Isopentenyl-diphosphate delta-isomerase from Lacticaseibacillus casei (strain BL23) (Lactobacillus casei).